We begin with the raw amino-acid sequence, 496 residues long: N-acetylmuramoyl-L-alanine amidase LytC (496 aa).

Positions 1–24 (MRSYIKVLTMCFLGLILFVPTALA) are cleaved as a signal peptide. 3 tandem repeats follow at residues 30–128 (RVGG…ISIK), 129–222 (RIAG…PSPT), and 223–318 (RISG…NPVV). Residues 30 to 318 (RVGGSNRYGT…VANQLKNPVV (289 aa)) form a 3 X tandem repeats region. In terms of domain architecture, MurNAc-LAA spans 322 to 490 (IFIDPGHGDQ…DKAAQAIHDG (169 aa)).

This sequence belongs to the N-acetylmuramoyl-L-alanine amidase 3 family.

It is found in the secreted. The protein localises to the cell wall. The enzyme catalyses Hydrolyzes the link between N-acetylmuramoyl residues and L-amino acid residues in certain cell-wall glycopeptides.. Functionally, autolysins are cell wall hydrolases involved in some important biological processes such as cell separation, cell-wall turnover, competence for genetic transformation, formation of the flagella - in particular of its basal body - and sporulation. Has a high affinity for teichoic acid-endowed peptidoglycan. LytC is required for efficient swarming motility but not at the level of cell separation or flagellum biosynthesis. Rather, LytC appears to be important for proper flagellar function. The sequence is that of N-acetylmuramoyl-L-alanine amidase LytC (lytC) from Bacillus subtilis (strain 168).